A 303-amino-acid polypeptide reads, in one-letter code: D-alanyl-D-alanine carboxypeptidase (303 aa).

The chain crosses the membrane as a helical span at residues 7 to 23 (LLLLLFLIYLGYDYVNE). The interval 37-56 (DQNPKEHLENSGTSENTQEK) is disordered. Substrate-binding positions include 154–156 (YAL) and Ser-161. Residues His-163 and Asp-170 each contribute to the Zn(2+) site. Glu-213 serves as the catalytic Proton donor/acceptor. His-216 is a binding site for Zn(2+).

It belongs to the peptidase M15B family. Zn(2+) serves as cofactor.

It is found in the cell membrane. With respect to regulation, the DD-carboxypeptidase activity is not inhibited by beta-lactam antibiotics. Functionally, cleaves the C-terminal D-alanine residue of UDP-muramyl-pentapeptide (UDP-MurNAc-L-Ala-D-Glu-mDAP-D-Ala-D-Ala) or diacetyl-L-Lys-D-Ala-D-Ala. However the physiological substrate likely contains L-Lys instead of mDAP at the third position of the pentapeptide. Also releases the C-terminal D-lactate from UDP-MurNAc-L-Ala-D-Glu-mDAP-D-Ala-D-lactate, a depsipeptide produced by the vancomycin resistance protein VanA. Therefore, VanY should contribute in vivo to the hydrolysis of both the D-alanyl-D-alanine- and the depsipeptide-containing peptidoglycan precursors. Is not necessary for vancomycin resistance of E.faecium BM4147 and perhaps not W14-9. Does not display transpeptidase or beta-lactamase activities. The chain is D-alanyl-D-alanine carboxypeptidase from Enterococcus faecium (Streptococcus faecium).